The following is a 153-amino-acid chain: MFTIDFTDHTGEVNSEWYQQIDNLLTFAKKEEKIEDDAELSVTFVNKQEIQEINRDYRNKDKVTDVISFALEEDEPDIEGLDMPRVLGDIIICADVAKEQAEEYGHSFERELGFLALHGFLHLLGYDHMNEADEKEMFGRQKLILDNYGLTRD.

Zn(2+) contacts are provided by H118, H122, and H128.

It belongs to the endoribonuclease YbeY family. It depends on Zn(2+) as a cofactor.

The protein resides in the cytoplasm. In terms of biological role, single strand-specific metallo-endoribonuclease involved in late-stage 70S ribosome quality control and in maturation of the 3' terminus of the 16S rRNA. The chain is Endoribonuclease YbeY from Staphylococcus carnosus (strain TM300).